Reading from the N-terminus, the 475-residue chain is Zinc finger protein 296 (475 aa).

The segment at 1–78 (MSRRKAGSAP…SPGPMPAGAA (78 aa)) is disordered. K35 is covalently cross-linked (Glycyl lysine isopeptide (Lys-Gly) (interchain with G-Cter in SUMO2)). C2H2-type zinc fingers lie at residues 157 to 180 (LSCLRCGKQFTVAWKLLRHAQWDH), 231 to 253 (PTCPVCKKTLSSFSNLKVHMRSH), and 259 to 281 (YACDQCPYACAQSSKLNRHKKTH). Residues 275-385 (NRHKKTHRQV…KSGGKSRGPG (111 aa)) are disordered. Low complexity-rich tracts occupy residues 295–313 (SQEQASAAPPEPAVHAAAP) and 326–338 (GAAATAGVQEPGA). Over residues 339-351 (PGSGAQAGPGGDT) the composition is skewed to gly residues. The span at 354-367 (AITTEQRTDPANSQ) shows a compositional bias: polar residues. 3 C2H2-type zinc fingers span residues 386 to 408 (GSCEFCGKHFTNSSNLTVHRRSH), 414 to 436 (YTCEFCNYACAQSSKLNRHRRMH), and 445 to 468 (FECPHCHVPFGLRATLDKHLRQKH).

The protein belongs to the krueppel C2H2-type zinc-finger protein family. In terms of assembly, interacts with KLF4.

Its subcellular location is the nucleus. Functionally, may be a transcriptional corepressor with KLF4. This chain is Zinc finger protein 296 (ZNF296), found in Homo sapiens (Human).